Consider the following 414-residue polypeptide: Putative transporter YoaB (414 aa).

Over 1–11 (MLDKIGIPKRL) the chain is Cytoplasmic. Residues 12–32 (AWGFLGVVLFMMGDGLEQGWL) form a helical membrane-spanning segment. The Extracellular segment spans residues 33–47 (SPFLIENGLTVQQSA). The chain crosses the membrane as a helical span at residues 48–68 (SIFSIYGIALAIASWFSGVCL). The Cytoplasmic segment spans residues 69–75 (EAFGAKR). Residues 76-96 (TMFMGLLFYVIGTAAFIVFGF) form a helical membrane-spanning segment. Residues 97–107 (EQLNLPVMYVT) are Extracellular-facing. A helical transmembrane segment spans residues 108 to 128 (YFVKGLGYPLFAYSFLTWVIY). The Cytoplasmic portion of the chain corresponds to 129–136 (RTPQSKLS). The helical transmembrane segment at 137–157 (TAVGWFWIAYCLGMFVFGAWY) threads the bilayer. Residues 158–167 (SSYAIKAFGY) lie on the Extracellular side of the membrane. Residues 168–188 (LNTLWSSIFWVCLGAFFALFI) traverse the membrane as a helical segment. At 189–219 (NKDRFEKKKRKRSETAEELLKGVTILFTNPR) the chain is on the cytoplasmic side. The helical transmembrane segment at 220–240 (VLTGGIIRIINSIGTYGFPVF) threads the bilayer. The Extracellular segment spans residues 241-255 (LPMHMAQHGISTNVW). A helical transmembrane segment spans residues 256 to 276 (LQIWGTIFLGNIVFNLIFGIV). The Cytoplasmic portion of the chain corresponds to 277–286 (GDKFGWKNTV). The helical transmembrane segment at 287 to 307 (IWFGGVGCGIFTVLLYYAPVF) threads the bilayer. At 308–316 (SGGSLAVVS) the chain is on the extracellular side. Residues 317-337 (VIGFIWGGLLAGYVPIGAIVP) traverse the membrane as a helical segment. The Cytoplasmic segment spans residues 338-343 (TVAGKD). The chain crosses the membrane as a helical span at residues 344–364 (KGAAMSVLNLAAGLSAFVGPA). The Extracellular portion of the chain corresponds to 365 to 375 (LAWLFIGLVGA). The chain crosses the membrane as a helical span at residues 376-398 (QGVVWIFAALYLASAVLTKCIHI). Over 399–414 (PEEKAVKEETSPQYAS) the chain is Cytoplasmic.

The protein belongs to the major facilitator superfamily. Sugar transporter (TC 2.A.1.1) family. CsbX subfamily.

The protein resides in the cell membrane. This Bacillus subtilis (strain 168) protein is Putative transporter YoaB (yoaB).